The following is a 333-amino-acid chain: MARHSFFCVDGHTCGNPVRLVAGGGPNLNGSTMMEKRAHFLAEYDWIRTGLMFEPRGHDMMSGSILYPPTRPDCDVAVLFIETSGCLPMCGHGTIGTVTMAIEQGLVTPKTPGKLNLDTPAGLVAIEYEQDGQYVERVRLTNVPAFLYAEGLEVECPDLGPIKVDVAYGGNFYAIVEPQENYTDMDDYSALQLIAWSPVLRQRLNEKYKFQHPELPDINRLSHILWTGKPKHPQAHARNAVFYGDKAIDRSPCGTGTSARMAQLAAKGKLKPCDEFIHESIIGSLFHGRVERAAEVAGRPAIVPSIAGWARMTGYNTIFIDDRDPFAHGFSMA.

The active-site Proton acceptor is the Cys-90. Substrate contacts are provided by residues 91–92 (GH) and Asp-249. Cys-253 (proton donor) is an active-site residue. 254-255 (GT) contacts substrate.

The protein belongs to the proline racemase family. Homodimer.

It catalyses the reaction trans-4-hydroxy-L-proline = cis-4-hydroxy-D-proline. Functionally, allows intracellular utilization of 4-hydroxyproline, one of the major constituents of host collagen, by converting 4-hydroxy-L-proline to 4-hydroxy-D-proline, which can be further metabolized by intracellular 4-hydroxy-D-proline oxidases. Strong B-cell mitogen. Plays an important role in the regulation of intra- and extracellular amino acid pools, allowing the bacterium to profit from host precursors and enzymatic pathways. The protein is 4-hydroxyproline epimerase of Brucella abortus (strain S19).